A 479-amino-acid chain; its full sequence is MDMNMDGKTVIVAGLGVSGQSMMEVLGSRAGRVLGVDEKKPDADLHSFDQIDWDNTDMVMTSPVFNPRTPFILEAQKRNIPVMSEVELAWQLRVNSNTTGKPAQWIGITGTNGKTSTTEMTSEMLTACGLAAPAVGNIGKAVSHAAVDPANDVLCVELSSFQLHFTYSLELDCAAITNIADDHLDWHGGIENYAADKAKVFHNVKKALVYNADDERVTKLAFAAQTAPECRRIGFTLAEPKDGQIGVKDGWIVDMSGIAGGEAGKPFQVAKVTDFTHLTEPDGTVYPHLLADALTALALVLGLGADKDKALAALKQFTPGGHRIQTVAVAKTSDGGTIRFVDDSKATNAHAAKASLNSFADKSVVWIAGGLAKGSRFEQLVADQARTIKAAIIIGKDQQPMLDAFKASAPDIPMSIIDPTDNDTVMARAIDAAGTYAQSGDVVLMAPACASMDQFKSYADRGNQFAQQAQRWVNEHGEA.

110–116 (GTNGKTS) contributes to the ATP binding site.

This sequence belongs to the MurCDEF family.

It is found in the cytoplasm. It catalyses the reaction UDP-N-acetyl-alpha-D-muramoyl-L-alanine + D-glutamate + ATP = UDP-N-acetyl-alpha-D-muramoyl-L-alanyl-D-glutamate + ADP + phosphate + H(+). It participates in cell wall biogenesis; peptidoglycan biosynthesis. Cell wall formation. Catalyzes the addition of glutamate to the nucleotide precursor UDP-N-acetylmuramoyl-L-alanine (UMA). The protein is UDP-N-acetylmuramoylalanine--D-glutamate ligase of Bifidobacterium adolescentis (strain ATCC 15703 / DSM 20083 / NCTC 11814 / E194a).